A 294-amino-acid polypeptide reads, in one-letter code: MDTNKAKKLKVMNQLVEGHDLTTQLQQLLSQPGSGLEDLVAKILVCFNNTISVLDTFEPISSSSSLAAVEGSQNASCDNDGKFEDSGDSRKRLGPVKGKRGCYKRKKRSETCTIESTILEDAFSWRKYGQKEILNAKFPRSYFRCTHKYTQGCKATKQVQKVELEPKMFSITYIGNHTCNTNAETPKSKTCDHHDEIFMDSEDHKSPSLSTSMKEEDNPHRHHGSSTENDLSLVWPEMVFEEDYHHQASYVNGKTSTSIDVLGSQDLMVFGGGGDFEFSENEHFSIFSSCSNLS.

The interval S72 to G94 is disordered. Basic and acidic residues predominate over residues N79–K91. The Nuclear localization signal motif lies at R90 to K97. Positions I114 to N182 form a DNA-binding region, WRKY. The segment at S201 to N229 is disordered.

Belongs to the WRKY group III family. Interacts with WRKY30. Binds to BZR2/BES1 to cooperatively regulate the expression of target genes. Binds to unmodified (i.e. not sumoylated) NPR1. Phosphorylated and destabilized by ASK7/BIN2. Expressed in leaves and flowers.

Its subcellular location is the nucleus. Functionally, transcription factor involved in senescence, biotic and abiotic stress responses by modulating various phytohormones signaling pathways. Interacts specifically with the W box (5'-(T)TGAC[CT]-3'), a frequently occurring elicitor-responsive cis-acting element. Binds to the 5'-[CT]GACTTTT-3' motif in promoters of target genes to induce their expression. Binding to the W-box element of PR-1 promoter is mediated by not-sumoylated NPR1 in the absence of salicylic acid. Plays an important but not indispensable role in jasmonate and salicylic acid signaling. Positively regulates the salicylic acid (SA)-mediated signal pathway, but negatively the jasmonic acid (JA)-mediated signal pathway, thus determining the balance between these mutually antagonistic pathways. Together with WRKY46, WRKY53 and WRKY54, prevents defense response to the necrotrophic pathogens P.carotovorum and B.cinerea, but promotes defense responses (including SA-induced pathogenesis-related (PR) genes expression) against biotrophic/hemibiotrophic SA-monitored pathogens (e.g. P.syringae, E.carotovora subsp. carotovora SCC3193 and E.cichoracearum), probably by regulating negatively the JA/ET and positively the SA signaling pathways. Contributes to the suppression of jasmonic acid (MeJA)-induced expression of JA-responsive genes (e.g. PDF1.2). Promotes susceptibility to JA-monitored pathogens (e.g. A.brassicicola), probably by facilitating SA-controlled suppression of JA-mediated defense. Represses the biosynthesis of the phytoalexin camalexin and indol-3-ylmethyl glucosinolate (IGS). Represses both SA and JA/ethylene (ET) mediated defense marker genes expression. Negative regulator of SA biosynthesis. Negative regulator of EDS1-dependent defense against E.amylovora. Required for RPP4-mediated disease resistance and basal defense against H.parasitica, probably via late up-regulation (LURP) of resistance genes (e.g. CML10/CaBP22 and LURP1). Probably involved in defense responses toward insects (e.g. P.xylostella and B.brassicae). Together with WRKY54, negative regulator of developmental senescence, probably via the regulation of several senescence-associated markers genes. Together with WRKY46 and WRKY54, promotes brassinosteroid (BR)-regulated plant growth but prevent drought response by modulating gene expression. In collaboration with WRKY54, prevents stomatal closure and, consequently, osmotic stress tolerance. Regulates rhizobacterium B.cereus AR156-induced systemic resistance (ISR) to P.syringae pv. tomato DC3000. In Arabidopsis thaliana (Mouse-ear cress), this protein is Probable WRKY transcription factor 70.